The primary structure comprises 223 residues: Pyridoxine/pyridoxamine 5'-phosphate oxidase (223 aa).

Substrate is bound by residues 13–16 (RKNY) and K73. FMN-binding positions include 68–73 (RIVLLK), 83–84 (YT), K90, and Q112. Substrate-binding residues include Y130, R134, and S138. FMN-binding positions include 147-148 (QS) and W193. Residue 199–201 (RLH) coordinates substrate. R203 lines the FMN pocket.

Belongs to the pyridoxamine 5'-phosphate oxidase family. Homodimer. FMN serves as cofactor.

It carries out the reaction pyridoxamine 5'-phosphate + O2 + H2O = pyridoxal 5'-phosphate + H2O2 + NH4(+). The enzyme catalyses pyridoxine 5'-phosphate + O2 = pyridoxal 5'-phosphate + H2O2. It functions in the pathway cofactor metabolism; pyridoxal 5'-phosphate salvage; pyridoxal 5'-phosphate from pyridoxamine 5'-phosphate: step 1/1. The protein operates within cofactor metabolism; pyridoxal 5'-phosphate salvage; pyridoxal 5'-phosphate from pyridoxine 5'-phosphate: step 1/1. Functionally, catalyzes the oxidation of either pyridoxine 5'-phosphate (PNP) or pyridoxamine 5'-phosphate (PMP) into pyridoxal 5'-phosphate (PLP). This chain is Pyridoxine/pyridoxamine 5'-phosphate oxidase, found in Rhodopirellula baltica (strain DSM 10527 / NCIMB 13988 / SH1).